Consider the following 361-residue polypeptide: Probable mannitol dehydrogenase (361 aa).

Zn(2+)-binding residues include cysteine 51, histidine 73, cysteine 104, cysteine 107, cysteine 110, cysteine 118, and cysteine 167.

It belongs to the zinc-containing alcohol dehydrogenase family. It depends on Zn(2+) as a cofactor.

It carries out the reaction D-mannitol + NAD(+) = D-mannose + NADH + H(+). Oxidizes mannitol to mannose. Provides the initial step by which translocated mannitol is committed to central metabolism and, by regulating mannitol pool size, is important in regulating salt tolerance at the cellular level. The sequence is that of Probable mannitol dehydrogenase (ELI3) from Mesembryanthemum crystallinum (Common ice plant).